The following is a 231-amino-acid chain: Large ribosomal subunit protein uL1 (231 aa).

It belongs to the universal ribosomal protein uL1 family. Part of the 50S ribosomal subunit.

Functionally, binds directly to 23S rRNA. The L1 stalk is quite mobile in the ribosome, and is involved in E site tRNA release. Protein L1 is also a translational repressor protein, it controls the translation of the L11 operon by binding to its mRNA. The polypeptide is Large ribosomal subunit protein uL1 (Halorhodospira halophila (strain DSM 244 / SL1) (Ectothiorhodospira halophila (strain DSM 244 / SL1))).